Here is a 481-residue protein sequence, read N- to C-terminus: Cysteine--tRNA ligase (481 aa).

Residue Cys-29 participates in Zn(2+) binding. Residues 31–41 (PTVYDYSHLGH) carry the 'HIGH' region motif. Residues Cys-210, His-235, and Glu-239 each contribute to the Zn(2+) site. Residues 272–276 (KMSKS) carry the 'KMSKS' region motif. Lys-275 provides a ligand contact to ATP.

Belongs to the class-I aminoacyl-tRNA synthetase family. As to quaternary structure, monomer. The cofactor is Zn(2+).

Its subcellular location is the cytoplasm. It carries out the reaction tRNA(Cys) + L-cysteine + ATP = L-cysteinyl-tRNA(Cys) + AMP + diphosphate. In Anaeromyxobacter sp. (strain K), this protein is Cysteine--tRNA ligase.